Here is a 505-residue protein sequence, read N- to C-terminus: L-carnitine/gamma-butyrobetaine antiporter (505 aa).

12 consecutive transmembrane segments (helical) span residues 10 to 30 (IEPK…WLTV), 51 to 71 (WGWA…WLVF), 92 to 112 (IFMM…SIEI), 143 to 163 (GPLP…FFFV), 195 to 215 (FYLV…TPLV), 231 to 251 (LDAI…ACGL), 263 to 283 (SYLS…SFIM), 316 to 336 (WTVF…IFLA), 347 to 367 (LCFG…TVLG), 403 to 423 (LSTA…VTLI), 446 to 466 (LLVR…LLAL), and 475 to 495 (AIIA…LSFI).

It belongs to the BCCT transporter (TC 2.A.15) family. CaiT subfamily. As to quaternary structure, homotrimer.

Its subcellular location is the cell inner membrane. The catalysed reaction is 4-(trimethylamino)butanoate(in) + (R)-carnitine(out) = 4-(trimethylamino)butanoate(out) + (R)-carnitine(in). The protein operates within amine and polyamine metabolism; carnitine metabolism. Catalyzes the exchange of L-carnitine for gamma-butyrobetaine. The sequence is that of L-carnitine/gamma-butyrobetaine antiporter from Salmonella choleraesuis (strain SC-B67).